The chain runs to 255 residues: tRNA pseudouridine synthase A (255 aa).

D60 acts as the Nucleophile in catalysis. Y118 serves as a coordination point for substrate.

It belongs to the tRNA pseudouridine synthase TruA family. Homodimer.

The catalysed reaction is uridine(38/39/40) in tRNA = pseudouridine(38/39/40) in tRNA. Formation of pseudouridine at positions 38, 39 and 40 in the anticodon stem and loop of transfer RNAs. The chain is tRNA pseudouridine synthase A from Leuconostoc mesenteroides subsp. mesenteroides (strain ATCC 8293 / DSM 20343 / BCRC 11652 / CCM 1803 / JCM 6124 / NCDO 523 / NBRC 100496 / NCIMB 8023 / NCTC 12954 / NRRL B-1118 / 37Y).